A 209-amino-acid chain; its full sequence is Uracil phosphoribosyltransferase (209 aa).

5-phospho-alpha-D-ribose 1-diphosphate-binding positions include Arg-79, Arg-104, and Asp-131 to Ser-139. Uracil is bound by residues Ile-194 and Gly-199 to Ala-201. Asp-200 contacts 5-phospho-alpha-D-ribose 1-diphosphate.

This sequence belongs to the UPRTase family. The cofactor is Mg(2+).

The enzyme catalyses UMP + diphosphate = 5-phospho-alpha-D-ribose 1-diphosphate + uracil. Its pathway is pyrimidine metabolism; UMP biosynthesis via salvage pathway; UMP from uracil: step 1/1. With respect to regulation, allosterically activated by GTP. Catalyzes the conversion of uracil and 5-phospho-alpha-D-ribose 1-diphosphate (PRPP) to UMP and diphosphate. The chain is Uracil phosphoribosyltransferase from Rhizobium etli (strain CIAT 652).